Consider the following 191-residue polypeptide: MPSELTPEERSELKNSIAEFHTYQLDPGSCSSLHAQRIHAPPELVWSIVRRFDKPQTYKHFIKSCSVEQNFEMRVGCTRDVIVISGLPANTSTERLDILDDERRVTGFSIIGGEHRLTNYKSVTTVHRFEKENRIWTVVLESYVVDMPEGNSEDDTRMFADTVVKLNLQKLATVAEAMARNSGDGSGSQVT.

Residues 23 to 176 (YQLDPGSCSS…NLQKLATVAE (154 aa)) form an START-like region. Lys-59 contributes to the abscisate binding site. Thr-78 bears the Phosphothreonine; by CARK1 mark. A Gate loop motif is present at residues 85–89 (SGLPA). Residues 89 to 94 (ANTSTE), 116 to 122 (RLTNYKS), and Glu-141 contribute to the abscisate site. The Latch loop signature appears at 115–117 (HRL).

Belongs to the PYR/PYL/RCAR abscisic acid intracellular receptor family. Homodimer. Binds ABA on one subunit only. Interacts with HAB1, AHG3, ABI1 and ABI2 when complexed to ABA, and possibly with other PP2Cs. Binds to CARs protein in an ABA-independent manner, both at the plasma membrane and in the nucleus. Interacts directly with CAR1 and CAR4. Interacts with CARK1 in the cytosol. Interacts with AIP1 in an abscisic acid-dependent manner. Interacts with FREE1 (via N-terminus). Interacts with the E3 ubiquitin-protein ligase RSL1 at the plasma membrane. Post-translationally, ubiquitynated and degraded by the proteasome upon binding to the E3 ubiquitin-protein ligase RSL1 at the plasma membrane. Phosphorylated by CARK1 especially in response to abscisic acid (ABA); this phosphorylation promotes its stability and inhibitory ability to ABI1.

It localises to the cytoplasm. It is found in the cytosol. Its subcellular location is the nucleus. The protein resides in the cell membrane. The protein localises to the vacuole. In terms of biological role, receptor for abscisic acid (ABA) required for ABA-mediated responses such as stomatal closure and germination inhibition. Inhibits the activity of group-A protein phosphatases type 2C (PP2Cs) when activated by ABA. Can be activated by both (-)-ABA and (+)-ABA. Promotes drought tolerance. The polypeptide is Abscisic acid receptor PYR1 (Arabidopsis thaliana (Mouse-ear cress)).